A 397-amino-acid chain; its full sequence is Cysteine desulfurase IscS (397 aa).

Residues Gly72–Ser73, Asn152, Gln180, and Ser200–His202 each bind pyridoxal 5'-phosphate. Lys203 is subject to N6-(pyridoxal phosphate)lysine. Residue Thr238 coordinates pyridoxal 5'-phosphate. Cys328 functions as the Cysteine persulfide intermediate in the catalytic mechanism. [2Fe-2S] cluster is bound at residue Cys328.

It belongs to the class-V pyridoxal-phosphate-dependent aminotransferase family. NifS/IscS subfamily. Homodimer. Forms a heterotetramer with IscU, interacts with other sulfur acceptors. Pyridoxal 5'-phosphate is required as a cofactor.

It is found in the cytoplasm. The enzyme catalyses (sulfur carrier)-H + L-cysteine = (sulfur carrier)-SH + L-alanine. It participates in cofactor biosynthesis; iron-sulfur cluster biosynthesis. Functionally, master enzyme that delivers sulfur to a number of partners involved in Fe-S cluster assembly, tRNA modification or cofactor biosynthesis. Catalyzes the removal of elemental sulfur atoms from cysteine to produce alanine. Functions as a sulfur delivery protein for Fe-S cluster synthesis onto IscU, an Fe-S scaffold assembly protein, as well as other S acceptor proteins. The chain is Cysteine desulfurase IscS from Clostridium botulinum (strain ATCC 19397 / Type A).